The sequence spans 61 residues: Putative antitoxin VapB21 (61 aa).

The protein belongs to the UPF0165 family.

Functionally, possibly the antitoxin component of a type II toxin-antitoxin (TA) system. Its cognate toxin is VapC21 (Potential). The polypeptide is Putative antitoxin VapB21 (vapB21) (Archaeoglobus fulgidus (strain ATCC 49558 / DSM 4304 / JCM 9628 / NBRC 100126 / VC-16)).